We begin with the raw amino-acid sequence, 354 residues long: Uptake hydrogenase small subunit (354 aa).

The segment at residues 1 to 44 is a signal peptide (tat-type signal); the sequence is MSQLETXYDVMRRQGITRRSFLKYCSLTGRPCLGPTFAPQIAHA. Cys-61, Cys-64, Cys-156, Cys-190, His-228, Ser-231, Cys-256, and Cys-262 together coordinate [4Fe-4S] cluster. [3Fe-4S] cluster contacts are provided by Cys-271, Cys-290, and Cys-293.

It belongs to the [NiFe]/[NiFeSe] hydrogenase small subunit family. In terms of assembly, heterodimer of a large and a small subunit. [4Fe-4S] cluster is required as a cofactor. It depends on [3Fe-4S] cluster as a cofactor. Post-translationally, predicted to be exported by the Tat system. The position of the signal peptide cleavage has not been experimentally proven.

The protein resides in the cell membrane. It catalyses the reaction H2 + A = AH2. Functionally, this enzyme recycles the H(2) produced by nitrogenase to increase the production of ATP and to protect nitrogenase against inhibition or damage by O(2) under carbon- or phosphate-limited conditions. The protein is Uptake hydrogenase small subunit (hupA) of Azotobacter chroococcum mcd 1.